We begin with the raw amino-acid sequence, 640 residues long: Protection of telomeres protein 1 (640 aa).

The protein belongs to the telombin family. As to quaternary structure, homodimer or homooligomer. Component of the shelterin complex (telosome) composed of TERF1, TERF2, TINF2, TERF2IP, ACD and POT1. Binds single-stranded telomeric DNA as a monomer. Associated component of the telomerase holoenzyme complex. Found in a complex with TERF1, TINF2 and TNKS1. Interacts with TNKS1. Forms heterodimers with ACD. Identified in a complex with ACD and single-stranded telomeric DNA.

The protein resides in the nucleus. It localises to the chromosome. It is found in the telomere. Component of the telomerase ribonucleoprotein (RNP) complex that is essential for the replication of chromosome termini. Is a component of the double-stranded telomeric DNA-binding TRF1 complex which is involved in the regulation of telomere length by cis-inhibition of telomerase. Also acts as a single-stranded telomeric DNA-binding protein and thus may act as a downstream effector of the TRF1 complex and may transduce information about telomere maintenance and/or length to the telomere terminus. Component of the shelterin complex (telosome) that is involved in the regulation of telomere length and protection. Shelterin associates with arrays of double-stranded TTAGGG repeats added by telomerase and protects chromosome ends; without its protective activity, telomeres are no longer hidden from the DNA damage surveillance and chromosome ends are inappropriately processed by DNA repair pathways. Binds to two or more telomeric single-stranded 5'-TTAGGG-3' repeats (G-strand) and with high specificity to a minimal telomeric single-stranded 5'-TAGGGTTAG-3' sequence. Binds telomeric single-stranded sequences internally or at proximity of a 3'-end. Its activity is TERT dependent but it does not increase TERT activity. This Mus musculus (Mouse) protein is Protection of telomeres protein 1 (Pot1).